A 320-amino-acid polypeptide reads, in one-letter code: tRNA dimethylallyltransferase (320 aa).

Residue 5–12 (GPTAVGKS) coordinates ATP. Position 7–12 (7–12 (TAVGKS)) interacts with substrate. Residues 30–33 (DSMQ) form an interaction with substrate tRNA region.

It belongs to the IPP transferase family. Monomer. The cofactor is Mg(2+).

It catalyses the reaction adenosine(37) in tRNA + dimethylallyl diphosphate = N(6)-dimethylallyladenosine(37) in tRNA + diphosphate. Its function is as follows. Catalyzes the transfer of a dimethylallyl group onto the adenine at position 37 in tRNAs that read codons beginning with uridine, leading to the formation of N6-(dimethylallyl)adenosine (i(6)A). The polypeptide is tRNA dimethylallyltransferase (Heliobacterium modesticaldum (strain ATCC 51547 / Ice1)).